A 481-amino-acid polypeptide reads, in one-letter code: Cysteine--tRNA ligase (481 aa).

C43 serves as a coordination point for Zn(2+). The short motif at 45-55 (ATVQGLPHIGH) is the 'HIGH' region element. Zn(2+) contacts are provided by C221, H246, and E250. Residues 277 to 281 (KMSKS) carry the 'KMSKS' region motif. K280 contributes to the ATP binding site.

This sequence belongs to the class-I aminoacyl-tRNA synthetase family. In terms of assembly, monomer. Requires Zn(2+) as cofactor.

Its subcellular location is the cytoplasm. It carries out the reaction tRNA(Cys) + L-cysteine + ATP = L-cysteinyl-tRNA(Cys) + AMP + diphosphate. The sequence is that of Cysteine--tRNA ligase from Mycobacterium sp. (strain KMS).